We begin with the raw amino-acid sequence, 445 residues long: Cyclic GMP-AMP phosphodiesterase SMPDL3A (445 aa).

The signal sequence occupies residues 1–22 (MALPGNFLCCLLVAWLCDPGLG). The Zn(2+) site is built by Asp-42 and His-44. Cys-59 and Cys-78 are joined by a disulfide. N-linked (GlcNAc...) asparagine glycosylation occurs at Asn-66. Asp-107 contributes to the Zn(2+) binding site. ATP is bound at residue His-111. A glycan (N-linked (GlcNAc...) asparagine) is linked at Asn-128. Residue Asn-148 participates in Zn(2+) binding. Residues Asn-148 and His-149 each coordinate ATP. N-linked (GlcNAc...) asparagine glycosylation is found at Asn-219 and Asn-235. The Zn(2+) site is built by His-249, His-290, and His-292. Residues Asn-353 and Asn-364 are each glycosylated (N-linked (GlcNAc...) asparagine). Disulfide bonds link Cys-417–Cys-421 and Cys-427–Cys-440.

This sequence belongs to the acid sphingomyelinase family. In terms of assembly, monomer. Homodimer; homodimerizes following 2',3'-cGAMP-binding. The cofactor is Zn(2+).

It is found in the secreted. It carries out the reaction 2',3'-cGAMP + H2O = 5'-pGpA(2'-5') + H(+). The catalysed reaction is 5'-pGpA(2'-5') + H2O = 5'-GpA(2'-5') + phosphate. It catalyses the reaction a ribonucleoside 5'-triphosphate + H2O = a ribonucleoside 5'-diphosphate + phosphate + H(+). The enzyme catalyses ATP + H2O = ADP + phosphate + H(+). Its function is as follows. Cyclic-nucleotide phosphodiesterase that acts as a negative regulator of innate immunity by mediating degradation of 2',3'-cGAMP, thereby inhibiting the cGAS-STING signaling. Specifically linearizes 2',3'-cGAMP into 2'5'-bond pGpA and further hydrolyzes pGpA to produce GpA. Also has in vitro nucleotide phosphodiesterase activity with nucleoside triphosphates, such as ATP. Has in vitro activity with p-nitrophenyl-TMP. Has lower activity with nucleoside diphosphates, and no activity with nucleoside monophosphates. Has in vitro activity with CDP-choline, giving rise to CMP and phosphocholine. Has in vitro activity with CDP-ethanolamine. Does not have sphingomyelin phosphodiesterase activity. The sequence is that of Cyclic GMP-AMP phosphodiesterase SMPDL3A (Smpdl3a) from Rattus norvegicus (Rat).